The chain runs to 110 residues: Phosphoribosyl-ATP pyrophosphatase (110 aa).

This sequence belongs to the PRA-PH family.

The protein resides in the cytoplasm. It carries out the reaction 1-(5-phospho-beta-D-ribosyl)-ATP + H2O = 1-(5-phospho-beta-D-ribosyl)-5'-AMP + diphosphate + H(+). It functions in the pathway amino-acid biosynthesis; L-histidine biosynthesis; L-histidine from 5-phospho-alpha-D-ribose 1-diphosphate: step 2/9. The polypeptide is Phosphoribosyl-ATP pyrophosphatase (Pseudomonas fluorescens (strain Pf0-1)).